Consider the following 1004-residue polypeptide: DNA-directed RNA polymerase subunit beta' (1004 aa).

Mg(2+)-binding residues include Asp388, Asp390, and Asp392. Residues Cys757, Cys831, Cys838, and Cys841 each coordinate Zn(2+).

It belongs to the RNA polymerase beta' chain family. As to quaternary structure, the RNAP catalytic core consists of 2 alpha, 1 beta, 1 beta' and 1 omega subunit. When a sigma factor is associated with the core the holoenzyme is formed, which can initiate transcription. The cofactor is Mg(2+). It depends on Zn(2+) as a cofactor.

The catalysed reaction is RNA(n) + a ribonucleoside 5'-triphosphate = RNA(n+1) + diphosphate. In terms of biological role, DNA-dependent RNA polymerase catalyzes the transcription of DNA into RNA using the four ribonucleoside triphosphates as substrates. The polypeptide is DNA-directed RNA polymerase subunit beta' (Oenococcus oeni (Leuconostoc oenos)).